The following is a 263-amino-acid chain: Cobalt-precorrin-6A reductase (263 aa).

Belongs to the precorrin-6x reductase family.

The catalysed reaction is Co-precorrin-6B + NAD(+) = Co-precorrin-6A + NADH + H(+). The protein operates within cofactor biosynthesis; adenosylcobalamin biosynthesis; cob(II)yrinate a,c-diamide from sirohydrochlorin (anaerobic route): step 7/10. Catalyzes the reduction of the macrocycle of cobalt-precorrin-6A to cobalt-precorrin-6B. The protein is Cobalt-precorrin-6A reductase (cbiJ) of Salmonella typhimurium (strain LT2 / SGSC1412 / ATCC 700720).